A 279-amino-acid polypeptide reads, in one-letter code: Large ribosomal subunit protein uL2 (279 aa).

The disordered stretch occupies residues 223–279 (VVMNPVDHPHGGGEGRTSGGRHPVTPWGKPTKGKRTRSNKKTDSLIMRSRHLAKKKR). Residues 270–279 (RSRHLAKKKR) are compositionally biased toward basic residues.

Belongs to the universal ribosomal protein uL2 family. As to quaternary structure, part of the 50S ribosomal subunit. Forms a bridge to the 30S subunit in the 70S ribosome.

Functionally, one of the primary rRNA binding proteins. Required for association of the 30S and 50S subunits to form the 70S ribosome, for tRNA binding and peptide bond formation. It has been suggested to have peptidyltransferase activity; this is somewhat controversial. Makes several contacts with the 16S rRNA in the 70S ribosome. The sequence is that of Large ribosomal subunit protein uL2 from Rhodospirillum rubrum (strain ATCC 11170 / ATH 1.1.1 / DSM 467 / LMG 4362 / NCIMB 8255 / S1).